A 138-amino-acid chain; its full sequence is 18 kDa antigen 2 (138 aa).

The region spanning glycine 21 to asparagine 131 is the sHSP domain.

Belongs to the small heat shock protein (HSP20) family.

Its function is as follows. Not known. This protein is one of the major immune reactive proteins in mycobacteria. The chain is 18 kDa antigen 2 from Mycobacterium avium.